The primary structure comprises 209 residues: MTYCDKSNQTSYPFVLPNLPYEKESFKPHFTAETFEYHHGKHHNAYVQNLNNLLKDKEELQKKNLEEIIDWSSQNQNIAIFNNAAQVWNHTFFWHSIKPNGGGKPSGKILKQINEDFGSFEEFCEQFKAEATGQFGSGWAWLVYHNNRLQIVKTANAGTPIANGMQPLLACDVWEHAYYIDYRNKRPDYVDIFIKHMINWEFVENNLTK.

Fe(3+) is bound by residues His38, His90, Asp172, and His176. Residues His38, His90, Asp172, and His176 each coordinate Mn(2+).

The protein belongs to the iron/manganese superoxide dismutase family. Mn(2+) serves as cofactor. It depends on Fe(3+) as a cofactor.

The enzyme catalyses 2 superoxide + 2 H(+) = H2O2 + O2. In terms of biological role, destroys superoxide anion radicals which are normally produced within the cells and which are toxic to biological systems. Catalyzes the dismutation of superoxide anion radicals into O2 and H2O2 by successive reduction and oxidation of the transition metal ion at the active site. This is Superoxide dismutase [Mn/Fe] (sodB) from Rickettsia bellii (strain RML369-C).